Here is a 514-residue protein sequence, read N- to C-terminus: Histidine ammonia-lyase (514 aa).

The segment at residues 144–146 (ASG) is a cross-link (5-imidazolinone (Ala-Gly)). S145 is subject to 2,3-didehydroalanine (Ser).

This sequence belongs to the PAL/histidase family. Contains an active site 4-methylidene-imidazol-5-one (MIO), which is formed autocatalytically by cyclization and dehydration of residues Ala-Ser-Gly.

It is found in the cytoplasm. The enzyme catalyses L-histidine = trans-urocanate + NH4(+). It functions in the pathway amino-acid degradation; L-histidine degradation into L-glutamate; N-formimidoyl-L-glutamate from L-histidine: step 1/3. The polypeptide is Histidine ammonia-lyase (Rhodospirillum rubrum (strain ATCC 11170 / ATH 1.1.1 / DSM 467 / LMG 4362 / NCIMB 8255 / S1)).